The following is a 468-amino-acid chain: Na(+)/H(+) antiporter (468 aa).

The next 8 helical transmembrane spans lie at 12–32 (HLAL…SEVF), 36–56 (LLVG…PHAA), 81–96 (DVRV…GAYF), 103–123 (IIVM…GFAY), 133–153 (GSLL…ALIV), 169–189 (LLIA…YFAI), 204–224 (WVLL…CVIG), and 258–278 (GIGT…GILF). N-linked (GlcNAc...) asparagine glycosylation occurs at N287. The chain crosses the membrane as a helical span at residues 293 to 313 (VPAFIDQTFSLLFFTYYGTII). N-linked (GlcNAc...) asparagine glycosylation occurs at N319. 3 consecutive transmembrane segments (helical) span residues 320–340 (WSVE…TLVC), 362–382 (ALFV…AFLA), and 408–428 (IIWP…GFSI). Phosphoserine occurs at positions 449 and 451.

It belongs to the fungal Na(+)/H(+) exchanger family.

It is found in the cell membrane. Functionally, sodium export from cell, takes up external protons in exchange for internal sodium ions. Involved in regulation of pH. In Schizosaccharomyces pombe (strain 972 / ATCC 24843) (Fission yeast), this protein is Na(+)/H(+) antiporter.